We begin with the raw amino-acid sequence, 598 residues long: Dihydroxy-acid dehydratase astD, mitochondrial (598 aa).

Residues 1–111 (MFASRIRSRA…HRAGLVPMRF (111 aa)) constitute a mitochondrion transit peptide. Residues 23–50 (RLPASTTGRRYKSDETLNRVSSKITQPK) form a disordered region. A compositionally biased stretch (polar residues) spans 40–50 (NRVSSKITQPK). Cysteine 86 serves as a coordination point for [2Fe-2S] cluster. Aspartate 118 serves as a coordination point for Mg(2+). Cysteine 159 is a binding site for [2Fe-2S] cluster. Residue aspartate 160 participates in Mg(2+) binding. Cysteine 232 is a [2Fe-2S] cluster binding site. Residue glutamate 485 coordinates Mg(2+). Catalysis depends on serine 511, which acts as the Proton acceptor.

The protein belongs to the IlvD/Edd family. [2Fe-2S] cluster serves as cofactor. The cofactor is Mg(2+).

Its subcellular location is the mitochondrion. The catalysed reaction is (2R)-2,3-dihydroxy-3-methylbutanoate = 3-methyl-2-oxobutanoate + H2O. It catalyses the reaction (2R,3R)-2,3-dihydroxy-3-methylpentanoate = (S)-3-methyl-2-oxopentanoate + H2O. Its pathway is amino-acid biosynthesis; L-isoleucine biosynthesis; L-isoleucine from 2-oxobutanoate: step 3/4. The protein operates within amino-acid biosynthesis; L-valine biosynthesis; L-valine from pyruvate: step 3/4. Its activity is regulated as follows. DHAD activity is not inhibited by the dihydroxyacid dehydratase inhibitor aspterric acid (AA). In terms of biological role, dihydroxyacid dehydratase; part of the gene cluster that mediates the biosynthesis of the sesquiterpenoid aspterric acid (AA), an inhibitor of dihydroxy-acid dehydratase (DHAD) effective as an herbicide. Performs the third step in the common pathway leading to biosynthesis of branched-chain amino acids. Catalyzes the dehydration of (2R,3R)-2,3-dihydroxy-3-methylpentanoate (2,3-dihydroxy-3-methylvalerate) into 2-oxo-3-methylpentanoate (2-oxo-3-methylvalerate) and of (2R)-2,3-dihydroxy-3-methylbutanoate (2,3-dihydroxyisovalerate) into 2-oxo-3-methylbutanoate (2-oxoisovalerate), the penultimate precursor to L-isoleucine and L-valine, respectively. AstD confers self-resistance in the presence of the dihydroxyacid dehydratase inhibitor aspterric acid (AA) produced by the ast cluster. This is Dihydroxy-acid dehydratase astD, mitochondrial from Aspergillus terreus (strain NIH 2624 / FGSC A1156).